We begin with the raw amino-acid sequence, 185 residues long: Ribosome-recycling factor (185 aa).

It belongs to the RRF family.

It localises to the cytoplasm. Its function is as follows. Responsible for the release of ribosomes from messenger RNA at the termination of protein biosynthesis. May increase the efficiency of translation by recycling ribosomes from one round of translation to another. The sequence is that of Ribosome-recycling factor from Arthrobacter sp. (strain FB24).